Consider the following 476-residue polypeptide: MASLTLRCDSTHLLPSRDVVKGTKPFGTSLVYPRIISKKFNVRMRVIPEEGDVFSSSKSNGSSMGIELQPDLVSFGTLAAEMIPTTMDSPEVEDEEFDLDRPTDGFASIPQAIEDIRHGKMVVVVDDEDRENEGDLIMAASLATPEAMAFVVKHGTGIVCVSMKGEDLERLELPLMVTRKDNEEKLRTAFTVSVDAKKGTSTGVSARDRAQTILTLASKDSKPEDFNRPGHIFPLRYREGGVLKRAGHTEASVDLTVLAGLEPVSVLCEIVDDDGSMARLPRLRQFAQENNLKLISIADLIRYRRKRERLVEFTAVAPIPTMWGPFKAHCFKSLLDGVEHIAMVKGEIGDGKDILVRVHAECITDDIFGNSSGGKQLAIAMRLIEENGRGVFVYLRGPESKGIDLSHKPRTYNTNSDQAEGVSFPVASREYGIGAQILRDLGVREMKVMTNNPAHYVGLKGYGLSISGKVPLITTP.

Residues 1–54 (MASLTLRCDSTHLLPSRDVVKGTKPFGTSLVYPRIISKKFNVRMRVIPEEGDVF) constitute a chloroplast transit peptide. The segment at 44–306 (MRVIPEEGDV…IADLIRYRRK (263 aa)) is DHBP synthase. Residues 130 to 131 (RE), Asp135, 245 to 249 (RAGHT), and Glu269 contribute to the D-ribulose 5-phosphate site. A Mg(2+)-binding site is contributed by Glu131. Position 248 (His248) interacts with Mg(2+). Residues 307–476 (RERLVEFTAV…SGKVPLITTP (170 aa)) form an inactive GTP cyclohydrolase II region. GTP contacts are provided by residues 357 to 361 (RVHAE), Gln376, 399 to 401 (ESK), and Thr450.

In the N-terminal section; belongs to the DHBP synthase family. The protein in the C-terminal section; belongs to the GTP cyclohydrolase II family. Mg(2+) is required as a cofactor. It depends on Mn(2+) as a cofactor. In terms of tissue distribution, expressed in leaves, shoots, roots, flowers and siliques.

It is found in the plastid. Its subcellular location is the chloroplast. It catalyses the reaction D-ribulose 5-phosphate = (2S)-2-hydroxy-3-oxobutyl phosphate + formate + H(+). It functions in the pathway cofactor biosynthesis; riboflavin biosynthesis; 2-hydroxy-3-oxobutyl phosphate from D-ribulose 5-phosphate: step 1/1. In terms of biological role, involved in riboflavin biosynthesis. Catalyzes the conversion of D-ribulose 5-phosphate to formate and 3,4-dihydroxy-2-butanone 4-phosphate. RIBA2 and RIBA3 together are not able to complement the loss of function of RIBA1. This is Monofunctional riboflavin biosynthesis protein RIBA 2, chloroplastic (RIBA2) from Arabidopsis thaliana (Mouse-ear cress).